The chain runs to 501 residues: Cytochrome P450 2J5 (501 aa).

Cys447 contributes to the heme binding site.

Belongs to the cytochrome P450 family. The cofactor is heme.

The protein localises to the endoplasmic reticulum membrane. It localises to the microsome membrane. The catalysed reaction is an organic molecule + reduced [NADPH--hemoprotein reductase] + O2 = an alcohol + oxidized [NADPH--hemoprotein reductase] + H2O + H(+). The sequence is that of Cytochrome P450 2J5 (Cyp2j5) from Mus musculus (Mouse).